The chain runs to 424 residues: Ribulose bisphosphate carboxylase (424 aa).

The active-site Proton acceptor is the Lys-159. Lys-161 serves as a coordination point for substrate. Residues Lys-185, Asp-187, and Glu-188 each coordinate Mg(2+). Lys-185 carries the post-translational modification N6-carboxylysine. His-277 serves as the catalytic Proton acceptor. Substrate contacts are provided by residues Arg-278, His-310, 347 to 349 (SGG), and 369 to 372 (QAGG).

The protein belongs to the RuBisCO large chain family. Type III subfamily. In terms of assembly, homodimer or homodecamer. In contrast to form I RuBisCO, the form III RuBisCO is composed solely of large subunits. It depends on Mg(2+) as a cofactor.

The enzyme catalyses 2 (2R)-3-phosphoglycerate + 2 H(+) = D-ribulose 1,5-bisphosphate + CO2 + H2O. The catalysed reaction is D-ribulose 1,5-bisphosphate + O2 = 2-phosphoglycolate + (2R)-3-phosphoglycerate + 2 H(+). Functionally, catalyzes the addition of molecular CO(2) and H(2)O to ribulose 1,5-bisphosphate (RuBP), generating two molecules of 3-phosphoglycerate (3-PGA). Functions in an archaeal AMP degradation pathway, together with AMP phosphorylase and R15P isomerase. This chain is Ribulose bisphosphate carboxylase, found in Pyrococcus abyssi (strain GE5 / Orsay).